Reading from the N-terminus, the 1365-residue chain is Serine-aspartate repeat-containing protein D (1365 aa).

Positions methionine 1–isoleucine 35 are cleaved as a signal peptide. The YSIRK-G/S signaling motif signature appears at phenylalanine 23–serine 34. The interval leucine 36–glutamate 568 is ligand binding A region. Positions glutamate 54–serine 185 are disordered. 2 stretches are compositionally biased toward polar residues: residues glutamate 62–glutamine 71 and glutamate 94–lysine 109. The span at lysine 130–asparagine 145 shows a compositional bias: basic and acidic residues. 2 stretches are compositionally biased toward polar residues: residues threonine 146–alanine 155 and asparagine 163–asparagine 173. Over residues glutamate 174–threonine 183 the composition is skewed to basic and acidic residues. 5 CNA-B domains span residues valine 569–proline 680, lysine 681–proline 791, lysine 792–proline 901, threonine 902–proline 1012, and lysine 1013–threonine 1123. 3 disordered regions span residues glutamate 857 to glycine 884, tyrosine 972 to threonine 991, and glutamate 1078 to alanine 1341. Composition is skewed to polar residues over residues serine 860 to serine 869 and tyrosine 972 to asparagine 981. 2 stretches are compositionally biased toward acidic residues: residues threonine 1091–glutamate 1101 and tyrosine 1118–serine 1304. The short motif at leucine 1328–glycine 1332 is the LPXTG sorting signal element. Position 1331 is a pentaglycyl murein peptidoglycan amidated threonine (threonine 1331). The propeptide at glycine 1332–lysine 1365 is removed by sortase.

Belongs to the serine-aspartate repeat-containing protein (SDr) family. Interacts with host DSG1; this interaction increases S.aureus adherence to keratinocytes.

Its subcellular location is the secreted. The protein resides in the cell wall. Functionally, cell surface-associated calcium-binding protein which plays an important role in adhesion and pathogenesis. Mediates interactions with components of the extracellular matrix such as host DSG1 to promote bacterial adhesion to host cells. Contributes to the resistance to killing by innate immune components such as neutrophils present in blood and thus attenuates bacterial clearance. In Staphylococcus aureus (strain MSSA476), this protein is Serine-aspartate repeat-containing protein D (sdrD).